A 475-amino-acid polypeptide reads, in one-letter code: Aspartyl/glutamyl-tRNA(Asn/Gln) amidotransferase subunit B (475 aa).

It belongs to the GatB/GatE family. GatB subfamily. In terms of assembly, heterotrimer of A, B and C subunits.

It carries out the reaction L-glutamyl-tRNA(Gln) + L-glutamine + ATP + H2O = L-glutaminyl-tRNA(Gln) + L-glutamate + ADP + phosphate + H(+). It catalyses the reaction L-aspartyl-tRNA(Asn) + L-glutamine + ATP + H2O = L-asparaginyl-tRNA(Asn) + L-glutamate + ADP + phosphate + 2 H(+). Functionally, allows the formation of correctly charged Asn-tRNA(Asn) or Gln-tRNA(Gln) through the transamidation of misacylated Asp-tRNA(Asn) or Glu-tRNA(Gln) in organisms which lack either or both of asparaginyl-tRNA or glutaminyl-tRNA synthetases. The reaction takes place in the presence of glutamine and ATP through an activated phospho-Asp-tRNA(Asn) or phospho-Glu-tRNA(Gln). This is Aspartyl/glutamyl-tRNA(Asn/Gln) amidotransferase subunit B from Clostridium novyi (strain NT).